The sequence spans 547 residues: uncharacterized protein (547 aa).

To B.subtilis RocB.

This is an uncharacterized protein from Bacillus subtilis (strain 168).